Here is a 141-residue protein sequence, read N- to C-terminus: Guanyl-specific ribonuclease Sa3 (141 aa).

A signal peptide (or 43) is located at residues 1–36 (MRIPPRLVALAGAAAVAATLIAGPVAAAAPASHAVA). C52 and C141 are disulfide-bonded. The active-site Proton acceptor is the E99. H130 (proton donor) is an active-site residue.

This sequence belongs to the ribonuclease N1/T1 family.

The protein localises to the secreted. It carries out the reaction [RNA] containing guanosine + H2O = an [RNA fragment]-3'-guanosine-3'-phosphate + a 5'-hydroxy-ribonucleotide-3'-[RNA fragment].. This is Guanyl-specific ribonuclease Sa3 (rnaSA3) from Kitasatospora aureofaciens (Streptomyces aureofaciens).